Consider the following 833-residue polypeptide: Leucine--tRNA ligase (833 aa).

Positions 41–52 match the 'HIGH' region motif; sequence PYPSGAGLHVGH. The 'KMSKS' region motif lies at 610–614; it reads KMSKS. ATP is bound at residue Lys613.

The protein belongs to the class-I aminoacyl-tRNA synthetase family.

It is found in the cytoplasm. It carries out the reaction tRNA(Leu) + L-leucine + ATP = L-leucyl-tRNA(Leu) + AMP + diphosphate. In Streptococcus pneumoniae serotype 19F (strain G54), this protein is Leucine--tRNA ligase.